We begin with the raw amino-acid sequence, 257 residues long: MALAKRIIPCLDVTAGRVVKGVNFVELRDAGDPVEIARRYDEQGADELTFLDITATSDQRDLILPIIEAVASQVFIPLTVGGGVRAVEDVRRLLNAGADKVSMNSSAVANPQLVRDAADKYGSQCIVVAIDAKRVSADGEAPRWEVFTHGGRKGTGLDAIEWARKMAEFGAGEILLTSMDRDGTKSGFDLALTRGVSDAVPVPVIASGGVGSLQDLADGIKDGRADAVLAASIFHYGEHTVGEAKRFMAEQGIPVRL.

Residues Asp12 and Asp131 contribute to the active site.

The protein belongs to the HisA/HisF family. As to quaternary structure, heterodimer of HisH and HisF.

It localises to the cytoplasm. The enzyme catalyses 5-[(5-phospho-1-deoxy-D-ribulos-1-ylimino)methylamino]-1-(5-phospho-beta-D-ribosyl)imidazole-4-carboxamide + L-glutamine = D-erythro-1-(imidazol-4-yl)glycerol 3-phosphate + 5-amino-1-(5-phospho-beta-D-ribosyl)imidazole-4-carboxamide + L-glutamate + H(+). The protein operates within amino-acid biosynthesis; L-histidine biosynthesis; L-histidine from 5-phospho-alpha-D-ribose 1-diphosphate: step 5/9. Its function is as follows. IGPS catalyzes the conversion of PRFAR and glutamine to IGP, AICAR and glutamate. The HisF subunit catalyzes the cyclization activity that produces IGP and AICAR from PRFAR using the ammonia provided by the HisH subunit. In Burkholderia multivorans (strain ATCC 17616 / 249), this protein is Imidazole glycerol phosphate synthase subunit HisF.